The following is a 155-amino-acid chain: MADVPKREVENVEFVFEVMGSPGEGIDAFDLGDALRALNLNPTLALIEKMGGTKKRNEKKIKLDEFLPIYSQVKKEKEQGCYEDFIECLKLYDKEENGTMLLAELQHALLALGESLDDEQVENLFADCMDPEDDEGFIPYSQFIQRLMSDPVVFD.

2 consecutive EF-hand domains span residues 7–41 (REVE…LNLN) and 80–115 (GCYE…LGES).

As to quaternary structure, myosin is a hexamer of 2 heavy chains and 4 light chains.

This Drosophila virilis (Fruit fly) protein is Myosin light chain alkali (Mlc1).